Consider the following 98-residue polypeptide: Alpha-elicitin capsicein (98 aa).

3 disulfide bridges follow: Cys3-Cys71, Cys27-Cys56, and Cys51-Cys95.

Belongs to the elicitin family.

Its subcellular location is the secreted. Functionally, induces local and distal defense responses (incompatible hypersensitive reaction) in plants from the solanaceae and cruciferae families. Elicits leaf necrosis and causes the accumulation of pathogenesis-related proteins. Might interact with the lipidic molecules of the plasma membrane. This chain is Alpha-elicitin capsicein, found in Phytophthora capsici.